The primary structure comprises 983 residues: Envelope glycoprotein gp160 (983 aa).

Residues M1 to L20 are compositionally biased toward basic and acidic residues. The interval M1–E22 is disordered. A signal peptide spans M1–N106. Residues Q107–Y832 lie on the Extracellular side of the membrane. 23 N-linked (GlcNAc...) asparagine; by host glycosylation sites follow: N140, N161, N206, N258, N298, N364, N381, N387, N403, N414, N435, N439, N470, N475, N481, N491, N501, N515, N527, N537, N542, N543, and N568. Residues G657–L677 are fusion peptide. Residues R689–V739 are a coiled coil. N697 carries an N-linked (GlcNAc...) asparagine; by host glycan. Residues L723–V739 form an immunosuppression region. Residues N765, N772, N788, and N822 are each glycosylated (N-linked (GlcNAc...) asparagine; by host). Residues E780–K815 adopt a coiled-coil conformation. The helical transmembrane segment at I833–I853 threads the bilayer. The Cytoplasmic portion of the chain corresponds to S854 to L983. The S-palmitoyl cysteine; by host moiety is linked to residue C856.

As to quaternary structure, the mature envelope protein (Env) consists of a trimer of SU-TM heterodimers attached by noncovalent interactions or by a labile interchain disulfide bond. In terms of processing, specific enzymatic cleavages in vivo yield mature proteins. Envelope glycoproteins are synthesized as an inactive precursor that is N-glycosylated and processed likely by host cell furin or by a furin-like protease in the Golgi to yield the mature SU and TM proteins. The cleavage site between SU and TM requires the minimal sequence [KR]-X-[KR]-R. The transmembrane protein is palmitoylated.

It is found in the virion membrane. Its subcellular location is the host cell membrane. The surface protein (SU) attaches the virus to the host cell by binding to its receptor. This interaction triggers the refolding of the transmembrane protein (TM) and is thought to activate its fusogenic potential by unmasking its fusion peptide. Fusion occurs at the host cell plasma membrane. In terms of biological role, the transmembrane protein (TM) acts as a class I viral fusion protein. Under the current model, the protein has at least 3 conformational states: pre-fusion native state, pre-hairpin intermediate state, and post-fusion hairpin state. During viral and target cell membrane fusion, the coiled coil regions (heptad repeats) assume a trimer-of-hairpins structure, positioning the fusion peptide in close proximity to the C-terminal region of the ectodomain. The formation of this structure appears to drive apposition and subsequent fusion of viral and target cell membranes. Membranes fusion leads to delivery of the nucleocapsid into the cytoplasm. This is Envelope glycoprotein gp160 (env) from Maedi visna virus (strain KV1772) (MVV).